The following is a 358-amino-acid chain: Uroporphyrinogen decarboxylase (358 aa).

Substrate is bound by residues 27-31 (RQAGR), aspartate 77, tyrosine 154, serine 209, and histidine 330.

It belongs to the uroporphyrinogen decarboxylase family. Homodimer.

The protein localises to the cytoplasm. The catalysed reaction is uroporphyrinogen III + 4 H(+) = coproporphyrinogen III + 4 CO2. The protein operates within porphyrin-containing compound metabolism; protoporphyrin-IX biosynthesis; coproporphyrinogen-III from 5-aminolevulinate: step 4/4. Catalyzes the decarboxylation of four acetate groups of uroporphyrinogen-III to yield coproporphyrinogen-III. In Acinetobacter baylyi (strain ATCC 33305 / BD413 / ADP1), this protein is Uroporphyrinogen decarboxylase.